A 131-amino-acid polypeptide reads, in one-letter code: Histone H2B.2 (131 aa).

Basic and acidic residues predominate over residues 1 to 19; sequence MSSAAEKKPASKAPAEKKP. Residues 1 to 37 are disordered; it reads MSSAAEKKPASKAPAEKKPAAKKTSTSVDGKKRSKVR. N6-acetyllysine; alternate occurs at positions 7 and 8. Residues lysine 7 and lysine 8 each participate in a glycyl lysine isopeptide (Lys-Gly) (interchain with G-Cter in SUMO); alternate cross-link. The residue at position 11 (serine 11) is a Phosphoserine. Lysine 12 is modified (N6-acetyllysine). Lysine 17, lysine 18, lysine 22, and lysine 23 each carry N6-acetyllysine; alternate. Residues lysine 17 and lysine 18 each participate in a glycyl lysine isopeptide (Lys-Gly) (interchain with G-Cter in SUMO); alternate cross-link. Residue lysine 22 is modified to N6-butyryllysine; alternate. Lysine 23 carries the N6-methyllysine; alternate modification. The residue at position 35 (lysine 35) is an N6-succinyllysine. Lysine 38 is subject to N6,N6-dimethyllysine. The residue at position 47 (lysine 47) is an N6-succinyllysine. Residue lysine 124 forms a Glycyl lysine isopeptide (Lys-Gly) (interchain with G-Cter in ubiquitin) linkage.

This sequence belongs to the histone H2B family. In terms of assembly, the nucleosome is a histone octamer containing two molecules each of H2A, H2B, H3 and H4 assembled in one H3-H4 heterotetramer and two H2A-H2B heterodimers. The octamer wraps approximately 147 bp of DNA. Interacts with NAP1. Post-translationally, monoubiquitinated by the RAD6/UBC2-BRE1 complex to form H2BK123ub1. H2BK123ub1 gives a specific tag for epigenetic transcriptional activation and is also prerequisite for H3K4me and H3K79me formation. H2BK123ub1 also modulates the formation of double-strand breaks during meiosis and is a prerequisite for DNA-damage checkpoint activation. Deubiquitination is performed by UBP8 in presence of SGF11. Phosphorylated by STE20 to form H2BS10ph during progression through meiotic prophase. May be correlated with chromosome condensation. H2BS10ph is also formed after H(2)O(2) treatment, and is a step leading to apoptosis. In terms of processing, acetylated by GCN5, a component of the SAGA complex, to form H2BK11ac and H2BK16ac. H2BK16ac can also be formed by ESA1, a component of the NuA4 histone acetyltransferase (HAT) complex. Acetylation of N-terminal lysines and particularly formation of H2BK11acK16ac has a positive effect on transcription. Post-translationally, sumoylation to form H2BK6su or H2BK7su, and probably also H2BK16su or H2BK17su, occurs preferentially near the telomeres and represses gene transcription.

Its subcellular location is the nucleus. It is found in the chromosome. Core component of nucleosome. Nucleosomes wrap and compact DNA into chromatin, limiting DNA accessibility to the cellular machineries which require DNA as a template. Histones thereby play a central role in transcription regulation, DNA repair, DNA replication and chromosomal stability. DNA accessibility is regulated via a complex set of post-translational modifications of histones, also called histone code, and nucleosome remodeling. The chain is Histone H2B.2 (HTB2) from Saccharomyces cerevisiae (strain ATCC 204508 / S288c) (Baker's yeast).